We begin with the raw amino-acid sequence, 447 residues long: MREIVHVQAGQCGNQIGSKFWEVISDEHGIDPTGRYHGDSDLQLERINCYFNEATAGRYVPRAILMDLEPGTMDSVRAGPFGQLFRPDNFVFGQTGAGNNWAKGHYTEGAELIDSVLDVVRKEAESCDALQGFQLTHSMGGGTGAGMGTLLISKVREEYPDRIMSTYSVIPSPKVSDTVVEPYNATLSVHQLVENADQCFTLDNEALYDICFRTLKLTTPTYGDLNHLVSAAICGTTCSLRFPGQLNCDLRKLAVNMVPFPRLHFFMIGFAPLTSRGSQQYRALTVPELTQQCFDSKNMMCAADPRHGRYLTCAVMFRGRMSTKEVDEQMLNVVNKNSSYFVEWIPNNVKASICDIPPKGLKMSTTFVGNTTAIQEVWKRVAEQFTAMFRRKAFLHWYTGEGMDEMEFTEAESNMNDLVSEYQQYQDATAEEEGEFDEDEELDDGMM.

8 residues coordinate GTP: Q11, E69, S138, G142, T143, G144, N204, and N226. Residue E69 coordinates Mg(2+). Residues 426–447 (QDATAEEEGEFDEDEELDDGMM) are disordered. A compositionally biased stretch (acidic residues) spans 429-447 (TAEEEGEFDEDEELDDGMM).

This sequence belongs to the tubulin family. Dimer of alpha and beta chains. A typical microtubule is a hollow water-filled tube with an outer diameter of 25 nm and an inner diameter of 15 nM. Alpha-beta heterodimers associate head-to-tail to form protofilaments running lengthwise along the microtubule wall with the beta-tubulin subunit facing the microtubule plus end conferring a structural polarity. Microtubules usually have 13 protofilaments but different protofilament numbers can be found in some organisms and specialized cells. Mg(2+) serves as cofactor.

Its subcellular location is the cytoplasm. It localises to the cytoskeleton. Functionally, tubulin is the major constituent of microtubules, a cylinder consisting of laterally associated linear protofilaments composed of alpha- and beta-tubulin heterodimers. Microtubules grow by the addition of GTP-tubulin dimers to the microtubule end, where a stabilizing cap forms. Below the cap, tubulin dimers are in GDP-bound state, owing to GTPase activity of alpha-tubulin. The protein is Tubulin beta-6 chain (TUBB6) of Ectocarpus variabilis (Brown alga).